Reading from the N-terminus, the 360-residue chain is Nicotinate-nucleotide--dimethylbenzimidazole phosphoribosyltransferase (360 aa).

Glutamate 327 functions as the Proton acceptor in the catalytic mechanism.

This sequence belongs to the CobT family.

The enzyme catalyses 5,6-dimethylbenzimidazole + nicotinate beta-D-ribonucleotide = alpha-ribazole 5'-phosphate + nicotinate + H(+). Its pathway is nucleoside biosynthesis; alpha-ribazole biosynthesis; alpha-ribazole from 5,6-dimethylbenzimidazole: step 1/2. Functionally, catalyzes the synthesis of alpha-ribazole-5'-phosphate from nicotinate mononucleotide (NAMN) and 5,6-dimethylbenzimidazole (DMB). In Shewanella baltica (strain OS155 / ATCC BAA-1091), this protein is Nicotinate-nucleotide--dimethylbenzimidazole phosphoribosyltransferase.